The chain runs to 288 residues: Ras-like protein 1 (288 aa).

Position 11 to 18 (11 to 18 (GGGGVGKS)) interacts with GTP. Residues 33-41 (YDPTIEDSY) carry the Effector region motif. GTP is bound by residues 58 to 62 (DTAGQ) and 117 to 120 (NKCD). The segment at 176–288 (EKQQQQQQQQ…KSKNGCCVIV (113 aa)) is disordered. Composition is skewed to low complexity over residues 178 to 216 (QQQQ…NNNN) and 246 to 281 (PNQS…SKSK). A lipid anchor (S-palmitoyl cysteine) is attached at cysteine 284. Residue cysteine 285 is modified to Cysteine methyl ester. Cysteine 285 is lipidated: S-farnesyl cysteine. The propeptide at 286-288 (VIV) is removed in mature form.

The protein belongs to the small GTPase superfamily. Ras family.

The protein localises to the cell membrane. It catalyses the reaction GTP + H2O = GDP + phosphate + H(+). Its activity is regulated as follows. Alternates between an inactive form bound to GDP and an active form bound to GTP. Activated by a guanine nucleotide-exchange factor (GEF) and inactivated by a GTPase-activating protein (GAP). Required for the regulation of both a MAP kinase signaling pathway and a cAMP signaling pathway. The activation of these pathways contributes to the pathogenicity of the cells through the induction of the morphological transition from the yeast to the polarized filamentous form. This chain is Ras-like protein 1 (RAS1), found in Candida albicans (strain WO-1) (Yeast).